The chain runs to 98 residues: Feather beta keratin (98 aa).

The residue at position 2 (serine 2) is an N-acetylserine.

Belongs to the avian keratin family. The avian keratins (F-ker, S-ker, C-ker and B-ker) are a complex mixture of very similar polypeptides.

In Cathartes aura (Turkey vulture), this protein is Feather beta keratin.